A 272-amino-acid chain; its full sequence is Inositol monophosphatase (272 aa).

4 residues coordinate Mg(2+): Glu-71, Asp-90, Ile-92, and Asp-93. A substrate-binding site is contributed by Glu-71. Residues Ile-92–Thr-95, Gly-194–Ala-196, Glu-213, and Asp-220 each bind substrate. Position 220 (Asp-220) interacts with Mg(2+).

It belongs to the inositol monophosphatase superfamily. Mg(2+) serves as cofactor.

Its subcellular location is the cytoplasm. It carries out the reaction a myo-inositol phosphate + H2O = myo-inositol + phosphate. It catalyses the reaction alpha-D-galactose 1-phosphate + H2O = D-galactose + phosphate. The protein operates within polyol metabolism; myo-inositol biosynthesis; myo-inositol from D-glucose 6-phosphate: step 2/2. Its activity is regulated as follows. Inhibited by Li(+), Ca(2+) and Mn(2+), but also by Mg(2+) at concentrations above 3 mM. Functionally, responsible for the provision of inositol required for synthesis of phosphatidylinositol and polyphosphoinositides. Has broad substrate specificity and can use myo-inositol monophosphates, myo-inositol 1,3-diphosphate, myo-inositol 1,4-diphosphate, scyllo-inositol-phosphate, D-galactose 1-phosphate, glucose-1-phosphate, glucose-6-phosphate, fructose-1-phosphate, beta-glycerophosphate, and 2'-AMP as substrates. In Dictyostelium discoideum (Social amoeba), this protein is Inositol monophosphatase (impa1).